The primary structure comprises 293 residues: MDSQLACPPNVFNYIESNRDEYQLSHDLTEIILQFPSTASQLSARLSRSCMKIDHCVIEFRQQVPINATGSVVVEIHDKRMTDNESLQASWTFPVRCNIDLHYFSSSFFSLKDPIPWKLYYKVCDSNVHQRTHFAKFKGKLKLSTAKHSVDIPFRAPTVKILSKQFTDKDVDFSHVGYGKWDRKMIRSASTSTIGLTGPIELRPGESWASRSTIGPSPSYAGSDQGDAMHPYKHLNRLGTTILDPGESASIIGAERTQSNITMSMVQLNEIVRATVQECINTNCTPSQPKTLQ.

The interval 207–228 is disordered; sequence SWASRSTIGPSPSYAGSDQGDA. The span at 209–222 shows a compositional bias: polar residues; sequence ASRSTIGPSPSYAG.

Belongs to the begomovirus movement protein BC1 family. Binds to dimeric supercoiled plasmid DNA. In terms of processing, phosphorylated.

The protein resides in the host cell membrane. It localises to the host microsome membrane. Its subcellular location is the host endoplasmic reticulum membrane. In terms of biological role, movement protein involved in the cell-to-cell and systemic transport of viral genomic DNA. Begomoviruses use 2 proteins to transport their DNA from cell to cell. The nuclear shuttle protein (NSP) shuttles it between nucleus and cytoplasm and the movement protein (MP) probably transports the DNA-NSP complex to the cell periphery and facilitates further movement across the cell wall. The sequence is that of Movement protein BC1 from Tomato golden mosaic virus (strain Yellow vein) (TGMV).